The sequence spans 81 residues: ATP synthase subunit c (81 aa).

2 consecutive transmembrane segments (helical) span residues 7–27 (AASV…PGIG) and 57–77 (LAFM…LLFA).

This sequence belongs to the ATPase C chain family. F-type ATPases have 2 components, F(1) - the catalytic core - and F(0) - the membrane proton channel. F(1) has five subunits: alpha(3), beta(3), gamma(1), delta(1), epsilon(1). F(0) has four main subunits: a(1), b(1), b'(1) and c(10-14). The alpha and beta chains form an alternating ring which encloses part of the gamma chain. F(1) is attached to F(0) by a central stalk formed by the gamma and epsilon chains, while a peripheral stalk is formed by the delta, b and b' chains.

The protein localises to the cellular thylakoid membrane. F(1)F(0) ATP synthase produces ATP from ADP in the presence of a proton or sodium gradient. F-type ATPases consist of two structural domains, F(1) containing the extramembraneous catalytic core and F(0) containing the membrane proton channel, linked together by a central stalk and a peripheral stalk. During catalysis, ATP synthesis in the catalytic domain of F(1) is coupled via a rotary mechanism of the central stalk subunits to proton translocation. In terms of biological role, key component of the F(0) channel; it plays a direct role in translocation across the membrane. A homomeric c-ring of between 10-14 subunits forms the central stalk rotor element with the F(1) delta and epsilon subunits. This is ATP synthase subunit c from Synechococcus sp. (strain CC9902).